A 340-amino-acid chain; its full sequence is Ketol-acid reductoisomerase (NADP(+)) (340 aa).

The region spanning 1–183 (MAITVYYDKD…GGGRTGIIET (183 aa)) is the KARI N-terminal Rossmann domain. Residues 26–29 (FGSQ), R49, S52, S54, and 84–87 (DEIQ) each bind NADP(+). The active site involves H109. An NADP(+)-binding site is contributed by G135. The KARI C-terminal knotted domain maps to 184–329 (TFKAETETDL…RNLRAMMPWI (146 aa)). Positions 192, 196, 228, and 232 each coordinate Mg(2+). S253 contacts substrate.

Belongs to the ketol-acid reductoisomerase family. Requires Mg(2+) as cofactor.

The enzyme catalyses (2R)-2,3-dihydroxy-3-methylbutanoate + NADP(+) = (2S)-2-acetolactate + NADPH + H(+). The catalysed reaction is (2R,3R)-2,3-dihydroxy-3-methylpentanoate + NADP(+) = (S)-2-ethyl-2-hydroxy-3-oxobutanoate + NADPH + H(+). The protein operates within amino-acid biosynthesis; L-isoleucine biosynthesis; L-isoleucine from 2-oxobutanoate: step 2/4. It functions in the pathway amino-acid biosynthesis; L-valine biosynthesis; L-valine from pyruvate: step 2/4. Its function is as follows. Involved in the biosynthesis of branched-chain amino acids (BCAA). Catalyzes an alkyl-migration followed by a ketol-acid reduction of (S)-2-acetolactate (S2AL) to yield (R)-2,3-dihydroxy-isovalerate. In the isomerase reaction, S2AL is rearranged via a Mg-dependent methyl migration to produce 3-hydroxy-3-methyl-2-ketobutyrate (HMKB). In the reductase reaction, this 2-ketoacid undergoes a metal-dependent reduction by NADPH to yield (R)-2,3-dihydroxy-isovalerate. This is Ketol-acid reductoisomerase (NADP(+)) from Campylobacter jejuni subsp. jejuni serotype O:2 (strain ATCC 700819 / NCTC 11168).